The chain runs to 1780 residues: Protein TIC 214 (1780 aa).

A run of 6 helical transmembrane segments spans residues 19-39 (IINSVVVVGLYYGFLTTFSIG), 68-88 (FIAGQLMMFISIYYAPLHLAL), 91-111 (PHTITVLALPYLLFHFFWNNN), 133-153 (VFLNNLIFQLFNHFILPSSML), 176-196 (VGWLIGHILFMKWVGLVLVWI), and 227-247 (IFSILLFITCVYYLGRTPSPI). The disordered stretch occupies residues 251 to 275 (KLKGTSETEERGGTKQDQEVSTEEA). Over residues 254–268 (GTSETEERGGTKQDQ) the composition is skewed to basic and acidic residues.

Belongs to the TIC214 family. As to quaternary structure, part of the Tic complex.

It is found in the plastid. Its subcellular location is the chloroplast inner membrane. Involved in protein precursor import into chloroplasts. May be part of an intermediate translocation complex acting as a protein-conducting channel at the inner envelope. This Draba nemorosa (Woodland whitlowgrass) protein is Protein TIC 214.